A 296-amino-acid polypeptide reads, in one-letter code: Homoserine kinase (296 aa).

Residue 84–94 participates in ATP binding; that stretch reads PLARGLGSSSS.

Belongs to the GHMP kinase family. Homoserine kinase subfamily.

Its subcellular location is the cytoplasm. It catalyses the reaction L-homoserine + ATP = O-phospho-L-homoserine + ADP + H(+). The protein operates within amino-acid biosynthesis; L-threonine biosynthesis; L-threonine from L-aspartate: step 4/5. Functionally, catalyzes the ATP-dependent phosphorylation of L-homoserine to L-homoserine phosphate. This is Homoserine kinase from Lactococcus lactis subsp. cremoris (strain SK11).